A 341-amino-acid polypeptide reads, in one-letter code: MKALSKLKPEEGIWMVDAPKPEVGHNDLLIKIRKTAICGTDVHIYNWDEWSQNTIPVPMVVGHEYVGEVVGMGQEVRGFTIGDRVSGEGHITCGHCRNCRGGRTHLCRNTSGVGVNREGAFAEYLVIPAFNAFKIPDDISDDLASIFDPFGNAVHTALSFDLVGEDVLITGAGPIGIMAAAVCRHVGARHVVITDVNEYRLELAQKMGATRAVNVAKEKLEDVMQELGMTEGFDVGLEMSGVPSAFHSMLDTMNHGGKIAMLGIPGGEMAIDWSKVIFKGLIIKGIYGREMFETWYKMASLIQSGLDISPIITHHFSIDEFQQGFDAMRSGQSGKVILNWD.

Cys38 serves as a coordination point for Zn(2+). Catalysis depends on charge relay system residues Thr40 and His43. Positions 63, 64, 93, 96, 99, and 107 each coordinate Zn(2+). NAD(+)-binding positions include Ile175, Asp195, Arg200, Leu262–Ile264, and Ile286–Tyr287.

Belongs to the zinc-containing alcohol dehydrogenase family. Homotetramer. Zn(2+) serves as cofactor.

The protein localises to the cytoplasm. It carries out the reaction L-threonine + NAD(+) = (2S)-2-amino-3-oxobutanoate + NADH + H(+). The protein operates within amino-acid degradation; L-threonine degradation via oxydo-reductase pathway; glycine from L-threonine: step 1/2. Its function is as follows. Catalyzes the NAD(+)-dependent oxidation of L-threonine to 2-amino-3-ketobutyrate. The sequence is that of L-threonine 3-dehydrogenase from Shewanella halifaxensis (strain HAW-EB4).